A 447-amino-acid chain; its full sequence is Phosphoglucosamine mutase (447 aa).

Ser104 serves as the catalytic Phosphoserine intermediate. Positions 104, 243, 245, and 247 each coordinate Mg(2+). Position 104 is a phosphoserine (Ser104).

It belongs to the phosphohexose mutase family. Requires Mg(2+) as cofactor. Activated by phosphorylation.

The enzyme catalyses alpha-D-glucosamine 1-phosphate = D-glucosamine 6-phosphate. In terms of biological role, catalyzes the conversion of glucosamine-6-phosphate to glucosamine-1-phosphate. This chain is Phosphoglucosamine mutase, found in Corynebacterium aurimucosum (strain ATCC 700975 / DSM 44827 / CIP 107346 / CN-1) (Corynebacterium nigricans).